We begin with the raw amino-acid sequence, 243 residues long: UDP-2,3-diacylglucosamine hydrolase (243 aa).

Mn(2+)-binding residues include aspartate 9, histidine 11, aspartate 42, asparagine 79, and histidine 114. 79 to 80 (NR) provides a ligand contact to substrate. Residues aspartate 122, serine 160, asparagine 164, and histidine 195 each contribute to the substrate site. Mn(2+) is bound by residues histidine 195 and histidine 197.

This sequence belongs to the LpxH family. The cofactor is Mn(2+).

The protein resides in the cell inner membrane. It catalyses the reaction UDP-2-N,3-O-bis[(3R)-3-hydroxytetradecanoyl]-alpha-D-glucosamine + H2O = 2-N,3-O-bis[(3R)-3-hydroxytetradecanoyl]-alpha-D-glucosaminyl 1-phosphate + UMP + 2 H(+). It participates in glycolipid biosynthesis; lipid IV(A) biosynthesis; lipid IV(A) from (3R)-3-hydroxytetradecanoyl-[acyl-carrier-protein] and UDP-N-acetyl-alpha-D-glucosamine: step 4/6. In terms of biological role, hydrolyzes the pyrophosphate bond of UDP-2,3-diacylglucosamine to yield 2,3-diacylglucosamine 1-phosphate (lipid X) and UMP by catalyzing the attack of water at the alpha-P atom. Involved in the biosynthesis of lipid A, a phosphorylated glycolipid that anchors the lipopolysaccharide to the outer membrane of the cell. This chain is UDP-2,3-diacylglucosamine hydrolase, found in Coxiella burnetii (strain Dugway 5J108-111).